The sequence spans 681 residues: MGNPGDRVSLGETWSREVHPDIDSERHSPSFSVERLTNILDGGIPNTELRRRVESLIQRDPVFNLKHLYFMTRDELYEDAVQKRFHLEKLAWSLGWSEDGPERIYADRVLAGYNNLNLHGIAMNAIRSLGSDEQIAKWGQLGKNFQIITTYAQTELGHGTYLQGLETEATYDATTQEFVIHSPTMTSIKWWPGDLGRTVTHAVVLAHLICLGARHGMHAFIVPIRSLEDHTPLPGITVGDIGPKMGFENIDNGFLRLNHVRVPRENMLSRFAEVLPDGTYQRLGTPQSNYLGMLVTRVQLLYKGFLPTLQKACTIAVRYAVIRHQSRLRPSDPEAKILEYQTQQQKLLPQLAVSYALHFMTTSLLQFFHSSYSDILKRDFSLLPELHALSTGMKAMSSDFCAQGTEICRRACGGHGYSKLSGLPTLVTQAIASCTYEGENTVLYLQVARFLMKSYLQAQVSPGSIPQKPLPQSVMYLATPRPARCPAQTAADFRCPEVYTTAWAYVSARLIRDATQHTQTLMRSGVDQYDAWNQTSVIHLQAAKAHCYFLTVRNFKEAVEKLDNEPEIQRVLQNLCDLYALNGILTNSGDFLHDGFLSGAQVDMARTAFLDLLPLIRKDAILLTDAFDFSDHCLNSALGCYDGHVYQRLFEWAQKSPANTQENPAYKKYIRPLMQSWKPKL.

Residues 1-28 are disordered; the sequence is MGNPGDRVSLGETWSREVHPDIDSERHS. A Phosphoserine modification is found at S9. T13 carries the post-translational modification Phosphothreonine. Over residues 14-28 the composition is skewed to basic and acidic residues; sequence WSREVHPDIDSERHS. An N6-succinyllysine mark is found at K66, K137, K303, K453, K561, and K667. The short motif at 679 to 681 is the Microbody targeting signal element; that stretch reads PKL.

The protein belongs to the acyl-CoA oxidase family. Homodimer. Requires FAD as cofactor. In terms of processing, acetylation of Lys-667 is observed in liver mitochondria from fasted mice but not from fed mice.

The protein localises to the peroxisome. It carries out the reaction (25R)-3alpha,7alpha,12alpha-trihydroxy-5beta-cholestan-26-oyl-CoA + A + H2O = (24R,25R)-3alpha,7alpha,12alpha,24-tetrahydroxy-5beta-cholestan-26-oyl-CoA + AH2. The enzyme catalyses (25S)-3alpha,7alpha,12alpha-trihydroxy-5beta-cholestan-26-oyl-CoA + O2 = (24E)-3alpha,7alpha,12alpha-trihydroxy-5beta-cholest-24-en-26-oyl-CoA + H2O2. Functionally, oxidizes the CoA esters of the bile acid intermediates di- and tri-hydroxycoprostanic acids. Capable of oxidizing short as well as long chain 2-methyl branched fatty acids. The sequence is that of Peroxisomal acyl-coenzyme A oxidase 2 from Mus musculus (Mouse).